We begin with the raw amino-acid sequence, 375 residues long: Histidine biosynthesis bifunctional protein HisB (375 aa).

Residues 1–168 (MTPIVFIDRD…GIAHTLADAP (168 aa)) are histidinol-phosphatase. Residue aspartate 8 is the Nucleophile of the active site. Residues aspartate 8, aspartate 10, and aspartate 128 each coordinate Mg(2+). Aspartate 10 functions as the Proton donor in the catalytic mechanism. The segment at 169–375 (RRAVVQRHTK…HVLPSTKGAL (207 aa)) is imidazoleglycerol-phosphate dehydratase.

The protein in the N-terminal section; belongs to the histidinol-phosphatase family. In the C-terminal section; belongs to the imidazoleglycerol-phosphate dehydratase family. Requires Mg(2+) as cofactor.

Its subcellular location is the cytoplasm. It carries out the reaction D-erythro-1-(imidazol-4-yl)glycerol 3-phosphate = 3-(imidazol-4-yl)-2-oxopropyl phosphate + H2O. It catalyses the reaction L-histidinol phosphate + H2O = L-histidinol + phosphate. Its pathway is amino-acid biosynthesis; L-histidine biosynthesis; L-histidine from 5-phospho-alpha-D-ribose 1-diphosphate: step 6/9. It functions in the pathway amino-acid biosynthesis; L-histidine biosynthesis; L-histidine from 5-phospho-alpha-D-ribose 1-diphosphate: step 8/9. The sequence is that of Histidine biosynthesis bifunctional protein HisB from Xylella fastidiosa (strain Temecula1 / ATCC 700964).